A 517-amino-acid polypeptide reads, in one-letter code: Bifunctional purine biosynthesis protein PurH (517 aa).

The MGS-like domain maps to 1–145 (MSPLALVSVS…KNHKDVSVLV (145 aa)).

The protein belongs to the PurH family.

It carries out the reaction (6R)-10-formyltetrahydrofolate + 5-amino-1-(5-phospho-beta-D-ribosyl)imidazole-4-carboxamide = 5-formamido-1-(5-phospho-D-ribosyl)imidazole-4-carboxamide + (6S)-5,6,7,8-tetrahydrofolate. It catalyses the reaction IMP + H2O = 5-formamido-1-(5-phospho-D-ribosyl)imidazole-4-carboxamide. It participates in purine metabolism; IMP biosynthesis via de novo pathway; 5-formamido-1-(5-phospho-D-ribosyl)imidazole-4-carboxamide from 5-amino-1-(5-phospho-D-ribosyl)imidazole-4-carboxamide (10-formyl THF route): step 1/1. It functions in the pathway purine metabolism; IMP biosynthesis via de novo pathway; IMP from 5-formamido-1-(5-phospho-D-ribosyl)imidazole-4-carboxamide: step 1/1. The polypeptide is Bifunctional purine biosynthesis protein PurH (Prochlorococcus marinus subsp. pastoris (strain CCMP1986 / NIES-2087 / MED4)).